The following is a 257-amino-acid chain: Hydroxyethylthiazole kinase (257 aa).

Position 49 (M49) interacts with substrate. The ATP site is built by R124 and T170. Position 197 (G197) interacts with substrate.

Belongs to the Thz kinase family. Mg(2+) serves as cofactor.

It catalyses the reaction 5-(2-hydroxyethyl)-4-methylthiazole + ATP = 4-methyl-5-(2-phosphooxyethyl)-thiazole + ADP + H(+). It functions in the pathway cofactor biosynthesis; thiamine diphosphate biosynthesis; 4-methyl-5-(2-phosphoethyl)-thiazole from 5-(2-hydroxyethyl)-4-methylthiazole: step 1/1. Its function is as follows. Catalyzes the phosphorylation of the hydroxyl group of 4-methyl-5-beta-hydroxyethylthiazole (THZ). In Klebsiella pneumoniae (strain 342), this protein is Hydroxyethylthiazole kinase.